The chain runs to 214 residues: Soluble inorganic pyrophosphatase (214 aa).

Residues K64, R78, and Y90 each coordinate substrate. Residues D100, D105, and D137 each coordinate Mg(2+). Position 174 (Y174) interacts with substrate.

Belongs to the PPase family. The cofactor is Mg(2+).

It is found in the cytoplasm. The enzyme catalyses diphosphate + H2O = 2 phosphate + H(+). The sequence is that of Soluble inorganic pyrophosphatase (IPP) from Oryza sativa subsp. indica (Rice).